The following is a 262-amino-acid chain: Phosphonates import ATP-binding protein PhnC (262 aa).

In terms of domain architecture, ABC transporter spans 5–253 (IRVEKLAKTF…RFDHLYRSIN (249 aa)). An ATP-binding site is contributed by 37–44 (GPSGSGKS).

The protein belongs to the ABC transporter superfamily. Phosphonates importer (TC 3.A.1.9.1) family. As to quaternary structure, the complex is composed of two ATP-binding proteins (PhnC), two transmembrane proteins (PhnE) and a solute-binding protein (PhnD).

It localises to the cell inner membrane. It carries out the reaction phosphonate(out) + ATP + H2O = phosphonate(in) + ADP + phosphate + H(+). In terms of biological role, part of the ABC transporter complex PhnCDE involved in phosphonates, phosphate esters, phosphite and phosphate import. Responsible for energy coupling to the transport system. This chain is Phosphonates import ATP-binding protein PhnC, found in Escherichia coli (strain K12).